Consider the following 251-residue polypeptide: Geranylgeranylglyceryl phosphate synthase (251 aa).

Residues Asp25 and Ser54 each contribute to the Mg(2+) site. Sn-glycerol 1-phosphate-binding positions include 173-179 (YLEAGSG), 204-205 (GG), and 226-227 (GT).

This sequence belongs to the GGGP/HepGP synthase family. Group II subfamily. Requires Mg(2+) as cofactor.

It is found in the cytoplasm. It catalyses the reaction sn-glycerol 1-phosphate + (2E,6E,10E)-geranylgeranyl diphosphate = sn-3-O-(geranylgeranyl)glycerol 1-phosphate + diphosphate. It functions in the pathway membrane lipid metabolism; glycerophospholipid metabolism. In terms of biological role, prenyltransferase that catalyzes the transfer of the geranylgeranyl moiety of geranylgeranyl diphosphate (GGPP) to the C3 hydroxyl of sn-glycerol-1-phosphate (G1P). This reaction is the first ether-bond-formation step in the biosynthesis of archaeal membrane lipids. The polypeptide is Geranylgeranylglyceryl phosphate synthase (Pyrococcus furiosus (strain ATCC 43587 / DSM 3638 / JCM 8422 / Vc1)).